Here is a 142-residue protein sequence, read N- to C-terminus: NCT transcriptional regulatory complex subunit B (142 aa).

The protein belongs to the NC2 beta/DR1 family. Forms the NCT transcriptional regulatory complex with nctA and mot1.

It is found in the nucleus. In terms of biological role, part of the NCT transcriptional regulatory complex that acts as a key regulator of ergosterol biosynthesis and the azole exporter cdr1B. The NCT complex binds the promoters of genes linked to azole susceptibility, and especially represses the expression of cdr1B transporter. This Aspergillus fumigatus (strain CBS 144.89 / FGSC A1163 / CEA10) (Neosartorya fumigata) protein is NCT transcriptional regulatory complex subunit B.